We begin with the raw amino-acid sequence, 473 residues long: Sulfate adenylyltransferase subunit 1 (473 aa).

The tr-type G domain occupies 19 to 238; sequence KTLLKFLTCG…IKIKNSISSE (220 aa). The interval 28 to 35 is G1; that stretch reads GSVDDGKS. A GTP-binding site is contributed by 28–35; it reads GSVDDGKS. The interval 86–90 is G2; the sequence is GITID. The segment at 107-110 is G3; that stretch reads DTPG. GTP-binding positions include 107-111 and 162-165; these read DTPGH and NKMD. Residues 162 to 165 form a G4 region; that stretch reads NKMD. A G5 region spans residues 200–202; that stretch reads SAL.

It belongs to the TRAFAC class translation factor GTPase superfamily. Classic translation factor GTPase family. CysN/NodQ subfamily. Heterodimer composed of CysD, the smaller subunit, and CysN.

It carries out the reaction sulfate + ATP + H(+) = adenosine 5'-phosphosulfate + diphosphate. It participates in sulfur metabolism; hydrogen sulfide biosynthesis; sulfite from sulfate: step 1/3. In terms of biological role, with CysD forms the ATP sulfurylase (ATPS) that catalyzes the adenylation of sulfate producing adenosine 5'-phosphosulfate (APS) and diphosphate, the first enzymatic step in sulfur assimilation pathway. APS synthesis involves the formation of a high-energy phosphoric-sulfuric acid anhydride bond driven by GTP hydrolysis by CysN coupled to ATP hydrolysis by CysD. The protein is Sulfate adenylyltransferase subunit 1 of Buchnera aphidicola subsp. Acyrthosiphon pisum (strain Tuc7).